A 170-amino-acid polypeptide reads, in one-letter code: Alpha-crystallin A chain (170 aa).

Met-1 is modified (N-acetylmethionine). The required for complex formation with BFSP1 and BFSP2 stretch occupies residues 1-63 (MDVTIQHPWF…RTVLDSGISE (63 aa)). Position 6 is a deamidated glutamine; partial (Gln-6). At Ser-45 the chain carries Phosphoserine. Residue Gln-50 is modified to Deamidated glutamine; partial. The 110-residue stretch at 52-161 (LFRTVLDSGI…SERTIPVSRE (110 aa)) folds into the sHSP domain. 2 positions are modified to N6-acetyllysine: Lys-70 and Lys-99. Residue His-100 participates in Zn(2+) binding. Asn-101 bears the Deamidated asparagine; partial mark. Glu-102, His-107, and His-151 together coordinate Zn(2+). Residues 144-170 (PKIVDPSHSERTIPVSREEKPSSAPSS) are disordered. The segment covering 148 to 164 (DPSHSERTIPVSREEKP) has biased composition (basic and acidic residues). The O-linked (GlcNAc) serine glycan is linked to Ser-159.

The protein belongs to the small heat shock protein (HSP20) family. As to quaternary structure, heteromer composed of three CRYAA and one CRYAB subunits. Inter-subunit bridging via zinc ions enhances stability, which is crucial as there is no protein turn over in the lens. Can also form homodimers and homotetramers (dimers of dimers) which serve as the building blocks of homooligomers. Within homooligomers, the zinc-binding motif is created from residues of 3 different molecules. His-100 and Glu-102 from one molecule are ligands of the zinc ion, and His-107 and His-151 residues from additional molecules complete the site with tetrahedral coordination geometry. Part of a complex required for lens intermediate filament formation composed of BFSP1, BFSP2 and CRYAA. In terms of processing, acetylation at Lys-70 may increase chaperone activity. Post-translationally, undergoes age-dependent proteolytical cleavage at the C-terminus.

It localises to the cytoplasm. Its subcellular location is the nucleus. Functionally, contributes to the transparency and refractive index of the lens. Acts as a chaperone, preventing aggregation of various proteins under a wide range of stress conditions. Required for the correct formation of lens intermediate filaments as part of a complex composed of BFSP1, BFSP2 and CRYAA. The protein is Alpha-crystallin A chain (CRYAA) of Choloepus hoffmanni (Hoffmann's two-fingered sloth).